A 238-amino-acid chain; its full sequence is Ubiquinone biosynthesis O-methyltransferase (238 aa).

Positions 39, 59, 80, and 124 each coordinate S-adenosyl-L-methionine.

Belongs to the methyltransferase superfamily. UbiG/COQ3 family.

The enzyme catalyses a 3-demethylubiquinol + S-adenosyl-L-methionine = a ubiquinol + S-adenosyl-L-homocysteine + H(+). It catalyses the reaction a 3-(all-trans-polyprenyl)benzene-1,2-diol + S-adenosyl-L-methionine = a 2-methoxy-6-(all-trans-polyprenyl)phenol + S-adenosyl-L-homocysteine + H(+). The protein operates within cofactor biosynthesis; ubiquinone biosynthesis. O-methyltransferase that catalyzes the 2 O-methylation steps in the ubiquinone biosynthetic pathway. This Aeromonas salmonicida (strain A449) protein is Ubiquinone biosynthesis O-methyltransferase.